Consider the following 163-residue polypeptide: Glutathione peroxidase 1 (163 aa).

Cys36 is an active-site residue.

The protein belongs to the glutathione peroxidase family.

The protein localises to the cytoplasm. The enzyme catalyses 2 glutathione + H2O2 = glutathione disulfide + 2 H2O. Its function is as follows. May constitute a glutathione peroxidase-like protective system against oxidative stresses. This is Glutathione peroxidase 1 (gpx-1) from Caenorhabditis elegans.